The sequence spans 215 residues: MOB kinase activator-like 1B (215 aa).

The interval 1–29 (MSLFGLGSRNQKTFRPKKSAPTGSKGAQL) is disordered. The Zn(2+) site is built by Cys-80, Cys-85, His-162, and His-167.

Belongs to the MOB1/phocein family. Constitutively expressed with higher expression in roots, flowers and pods than in leaves and stems.

The protein localises to the cytoplasm. Its subcellular location is the cytoskeleton. The protein resides in the phragmoplast. This Medicago sativa subsp. falcata (Sickle medic) protein is MOB kinase activator-like 1B.